A 475-amino-acid polypeptide reads, in one-letter code: Protein nucleotidyltransferase YdiU (475 aa).

ATP-binding residues include Gly82, Gly84, Arg85, Lys105, Asp117, Gly118, Arg168, and Arg175. Asp240 (proton acceptor) is an active-site residue. Mg(2+) is bound by residues Asn241 and Asp250. Residue Asp250 coordinates ATP.

It belongs to the SELO family. Requires Mg(2+) as cofactor. The cofactor is Mn(2+).

It carries out the reaction L-seryl-[protein] + ATP = 3-O-(5'-adenylyl)-L-seryl-[protein] + diphosphate. The catalysed reaction is L-threonyl-[protein] + ATP = 3-O-(5'-adenylyl)-L-threonyl-[protein] + diphosphate. The enzyme catalyses L-tyrosyl-[protein] + ATP = O-(5'-adenylyl)-L-tyrosyl-[protein] + diphosphate. It catalyses the reaction L-histidyl-[protein] + UTP = N(tele)-(5'-uridylyl)-L-histidyl-[protein] + diphosphate. It carries out the reaction L-seryl-[protein] + UTP = O-(5'-uridylyl)-L-seryl-[protein] + diphosphate. The catalysed reaction is L-tyrosyl-[protein] + UTP = O-(5'-uridylyl)-L-tyrosyl-[protein] + diphosphate. Functionally, nucleotidyltransferase involved in the post-translational modification of proteins. It can catalyze the addition of adenosine monophosphate (AMP) or uridine monophosphate (UMP) to a protein, resulting in modifications known as AMPylation and UMPylation. This chain is Protein nucleotidyltransferase YdiU, found in Aeromonas salmonicida (strain A449).